The sequence spans 325 residues: tRNA N6-adenosine threonylcarbamoyltransferase (325 aa).

Fe cation is bound by residues His111 and His115. Substrate is bound by residues 134-138 (LISGG), Asp167, Gly180, and Asn277. Residue Asp305 participates in Fe cation binding.

The protein belongs to the KAE1 / TsaD family. Fe(2+) serves as cofactor.

Its subcellular location is the cytoplasm. The protein localises to the secreted. It carries out the reaction L-threonylcarbamoyladenylate + adenosine(37) in tRNA = N(6)-L-threonylcarbamoyladenosine(37) in tRNA + AMP + H(+). In terms of biological role, required for the formation of a threonylcarbamoyl group on adenosine at position 37 (t(6)A37) in tRNAs that read codons beginning with adenine. Is involved in the transfer of the threonylcarbamoyl moiety of threonylcarbamoyl-AMP (TC-AMP) to the N6 group of A37, together with TsaE and TsaB. TsaD likely plays a direct catalytic role in this reaction. This chain is tRNA N6-adenosine threonylcarbamoyltransferase, found in Mannheimia haemolytica (Pasteurella haemolytica).